We begin with the raw amino-acid sequence, 180 residues long: MNEQLQLIKSSIKSIPNHPKEGIIFRDITSLIEVPEAFQATVDLIVGNYKNQGITKVVGTESRGFIFGAPVALALGLPFVLVRKPRKLPRETISQSYQLEYGEDTLEMHVDSVKAGDNVLIIDDLLATGGTVDATIKLIKRLGGDVKHAAFVINLPELGGEERLRSLGVEPFTLVNFEGH.

Belongs to the purine/pyrimidine phosphoribosyltransferase family. As to quaternary structure, homodimer.

It localises to the cytoplasm. It carries out the reaction AMP + diphosphate = 5-phospho-alpha-D-ribose 1-diphosphate + adenine. It functions in the pathway purine metabolism; AMP biosynthesis via salvage pathway; AMP from adenine: step 1/1. Catalyzes a salvage reaction resulting in the formation of AMP, that is energically less costly than de novo synthesis. This Mannheimia succiniciproducens (strain KCTC 0769BP / MBEL55E) protein is Adenine phosphoribosyltransferase.